A 206-amino-acid chain; its full sequence is VEL1-related protein SCY_5430 (206 aa).

The first 19 residues, 1–19 (MSFLNIFTFFSVLVSVATA), serve as a signal peptide directing secretion.

The protein belongs to the VEL1 family.

The protein resides in the cytoplasm. The protein localises to the cytosol. This chain is VEL1-related protein SCY_5430, found in Saccharomyces cerevisiae (strain YJM789) (Baker's yeast).